We begin with the raw amino-acid sequence, 87 residues long: Translation initiation factor IF-1 2 (87 aa).

One can recognise an S1-like domain in the interval 1–72 (MAADDHIEME…TKGRIARRTT (72 aa)). The disordered stretch occupies residues 65–87 (GRIARRTTTPSGGPRPARSGNRR).

Belongs to the IF-1 family. As to quaternary structure, component of the 30S ribosomal translation pre-initiation complex which assembles on the 30S ribosome in the order IF-2 and IF-3, IF-1 and N-formylmethionyl-tRNA(fMet); mRNA recruitment can occur at any time during PIC assembly.

It is found in the cytoplasm. One of the essential components for the initiation of protein synthesis. Stabilizes the binding of IF-2 and IF-3 on the 30S subunit to which N-formylmethionyl-tRNA(fMet) subsequently binds. Helps modulate mRNA selection, yielding the 30S pre-initiation complex (PIC). Upon addition of the 50S ribosomal subunit IF-1, IF-2 and IF-3 are released leaving the mature 70S translation initiation complex. The chain is Translation initiation factor IF-1 2 from Nitratidesulfovibrio vulgaris (strain ATCC 29579 / DSM 644 / CCUG 34227 / NCIMB 8303 / VKM B-1760 / Hildenborough) (Desulfovibrio vulgaris).